A 463-amino-acid chain; its full sequence is T-box transcription factor TBX1-B (463 aa).

2 disordered regions span residues 39–58 (SPSPGDPYSQHEPHYEPCSA) and 75–102 (GASSSSCASSTPGSGSTGSSSGNKAPVK). Positions 75–96 (GASSSSCASSTPGSGSTGSSSG) are enriched in low complexity. The T-box DNA-binding region spans 119 to 297 (LWDEFNQLGT…SNPFAKGFRD (179 aa)). Disordered regions lie at residues 320–343 (RSRNPVSSPPQNGSDKDGDGRREY) and 367–406 (SPSLPVPGGLVPLSTGRPSPPHELRLDPHSQGSEPLHHHP). The span at 323–332 (NPVSSPPQNG) shows a compositional bias: polar residues. The span at 333–343 (SDKDGDGRREY) shows a compositional bias: basic and acidic residues. Residues 367–380 (SPSLPVPGGLVPLS) show a composition bias toward low complexity. The Nuclear localization signal motif lies at 420-431 (KTRPAPYPLPSI).

As to quaternary structure, binds DNA as a dimer. Interacts with dscr6/ripply3.

It is found in the nucleus. Its function is as follows. Probable transcriptional regulator involved in developmental processes. Binds to the palindromic T site 5'-TTCACACCTAGGTGTGAA-3' DNA sequence. Induces pre-placodal ectoderm (PPE) gene expression in regions where RIPPLY3 is absent. Plays a role in the formation of the anteroposterior (AP) axis during embryonic development; required to establish the posterolateral border of the pre-placodal ectoderm (PPE) acting downstream of the retinoic acid receptor (RAR) signaling. Functionally, probable transcriptional regulator involved in developmental processes. Binds to the palindromic T site 5'-TTCACACCTAGGTGTGAA-3' DNA sequence. Is required for normal development of the pharyngeal arch arteries. This is T-box transcription factor TBX1-B (tbx1-b) from Xenopus laevis (African clawed frog).